The chain runs to 432 residues: Succinate--CoA ligase [GDP-forming] subunit beta, mitochondrial (432 aa).

A mitochondrion-targeting transit peptide spans 1 to 37 (MASPVAAQAGKLLRALALRPRFLAAGSQAVQLTSRRW). Positions 46-274 (KKLMSDNGVR…NAEFRQKDIF (229 aa)) constitute an ATP-grasp domain. Gln57 provides a ligand contact to GTP. Lys73 carries the post-translational modification N6-acetyllysine. The residue at position 78 (Lys78) is an N6-succinyllysine. Position 90 to 92 (90 to 92 (GRG)) interacts with GTP. N6-acetyllysine occurs at positions 132 and 139. Residue Leu146 coordinates GTP. A Phosphoserine modification is found at Ser161. Lys200, Lys218, and Lys227 each carry N6-acetyllysine. Residues Asn243 and Asp257 each coordinate Mg(2+). N6-acetyllysine occurs at positions 271 and 291. Residue Asn308 participates in substrate binding. An N6-succinyllysine modification is found at Lys338. An N6-acetyllysine modification is found at Lys347. 365–367 (GIV) serves as a coordination point for substrate. An N6-acetyllysine mark is found at Lys386 and Lys423.

Belongs to the succinate/malate CoA ligase beta subunit family. GTP-specific subunit beta subfamily. Heterodimer of an alpha and a beta subunit. The beta subunit determines specificity for GTP. Requires Mg(2+) as cofactor. As to expression, mainly expressed in liver, kidney, heart, spleen and skeletal muscle. Also found in intestine and colon, and in low amounts in lung, brain, prostate, testis and ovary.

Its subcellular location is the mitochondrion. The enzyme catalyses GTP + succinate + CoA = succinyl-CoA + GDP + phosphate. The protein operates within carbohydrate metabolism; tricarboxylic acid cycle; succinate from succinyl-CoA (ligase route): step 1/1. Functionally, GTP-specific succinyl-CoA synthetase functions in the citric acid cycle (TCA), coupling the hydrolysis of succinyl-CoA to the synthesis of GTP and thus represents the only step of substrate-level phosphorylation in the TCA. The beta subunit provides nucleotide specificity of the enzyme and binds the substrate succinate, while the binding sites for coenzyme A and phosphate are found in the alpha subunit. The polypeptide is Succinate--CoA ligase [GDP-forming] subunit beta, mitochondrial (Homo sapiens (Human)).